The chain runs to 380 residues: Cytochrome b (380 aa).

Helical transmembrane passes span 34-54, 78-99, 114-134, and 179-199; these read FGSL…LLAM, WLIR…FLHI, WNTG…GYVL, and FFAL…IHLT. The heme b site is built by His-84 and His-98. Heme b-binding residues include His-183 and His-197. His-202 is a binding site for a ubiquinone. Transmembrane regions (helical) follow at residues 227–247, 289–309, 321–341, and 348–368; these read IKDI…ALFS, LGGV…PFLH, LSQT…WIGS, and FIII…ILFP.

The protein belongs to the cytochrome b family. As to quaternary structure, the cytochrome bc1 complex contains 11 subunits: 3 respiratory subunits (MT-CYB, CYC1 and UQCRFS1), 2 core proteins (UQCRC1 and UQCRC2) and 6 low-molecular weight proteins (UQCRH/QCR6, UQCRB/QCR7, UQCRQ/QCR8, UQCR10/QCR9, UQCR11/QCR10 and a cleavage product of UQCRFS1). This cytochrome bc1 complex then forms a dimer. Requires heme b as cofactor.

The protein localises to the mitochondrion inner membrane. Component of the ubiquinol-cytochrome c reductase complex (complex III or cytochrome b-c1 complex) that is part of the mitochondrial respiratory chain. The b-c1 complex mediates electron transfer from ubiquinol to cytochrome c. Contributes to the generation of a proton gradient across the mitochondrial membrane that is then used for ATP synthesis. The sequence is that of Cytochrome b (MT-CYB) from Alectoris rufa (Red-legged partridge).